A 169-amino-acid polypeptide reads, in one-letter code: Peptide deformylase (169 aa).

Fe cation contacts are provided by cysteine 91 and histidine 133. Glutamate 134 is an active-site residue. Fe cation is bound at residue histidine 137.

Belongs to the polypeptide deformylase family. Fe(2+) serves as cofactor.

It catalyses the reaction N-terminal N-formyl-L-methionyl-[peptide] + H2O = N-terminal L-methionyl-[peptide] + formate. Functionally, removes the formyl group from the N-terminal Met of newly synthesized proteins. Requires at least a dipeptide for an efficient rate of reaction. N-terminal L-methionine is a prerequisite for activity but the enzyme has broad specificity at other positions. The polypeptide is Peptide deformylase (Hydrogenovibrio crunogenus (strain DSM 25203 / XCL-2) (Thiomicrospira crunogena)).